Consider the following 407-residue polypeptide: Arrestin domain-containing protein 2 (407 aa).

The protein belongs to the arrestin family. As to quaternary structure, interacts with WWP1 (via WW domains).

The protein is Arrestin domain-containing protein 2 (Arrdc2) of Mus musculus (Mouse).